Here is a 1616-residue protein sequence, read N- to C-terminus: MAYTQTATTSALLDTVRGNNSLVNDLAKRRLYDTAVEEFNARDRRPKVNFSKVISEEQTLIATRAYPEFQITFYNTQNAVHSLAGGLRSLELEYLMMQIPYGSLTYDIGGNFASHLFKGRAYVHCCMPNLDVRDIMRHEGQKDSIELYLSRLERGGKTVPNFQKEAFDRYAEIPEDAVCHNTFQTMRHQPMQQSGRVYAIALHSIYDIPADEFGAALLRKNVHTCYAAFHFSENLLLEDSYVNLDEINACFSRDGDKLTFSFASESTLNYCHSYSNILKYVCKTYFPASNREVYMKEFLVTRVNTWFCKFSRIDTFLLYKGVAHKSVDSEQFYTAMEDAWHYKKTLAMCNSERILLEDSSSVNYWFPKMRDMVIVPLFDISLETSKRTRKEVLVSKDFVFTVLNHIRTYQAKALTYANVLSFVESIRSRVIINGVTARSEWDVDKSLLQSLSMTFYLHTKLAVLKDDLLISKFSLGSKTVCQHVWDEISLAFGNAFPSVKERLLNRKLIRVAGDALEIRVPDLYVTFHDRLVTEYKASVDMPALDIRKKMEETEVMYNALSELSVLRESDKFDVDVFSQMCQSLEVDPMTAAKVIVAVMSNESGLTLTFERPTEANVALALQDQEKASEGALVVTSREVEEPSMKGSMARGELQLAGLAGDHPESSYSKNEEIESLEQFHMATADSLIRKQMSSIVYTGPIKVQQMKNFIDSLVASLSAAVSNLVKILKDTAAIDLETRQKFGVLDVASRKWLIKPTAKSHAWGVVETHARKYHVALLEYDEQGVVTCDDWRRVAVSSESVVYSDMAKLRTLRRLLRNGEPHVSSAKVVLVDGVPGCGKTKEILSRVNFDEDLILVPGKQAAEMIRRRANSSGIIVATKDNVKTVDSFMMNFGKSTRCQFKRLFIDEGLMLHTGCVNFLVAMSLCEIAYVYGDTQQIPYINRVSGFPYPAHFAKLEVDEVETRRTTLRCPADVTHYLNRRYEGFVMSTSSVKKSVSQEMVGGAAVINPISKPLHGKILTFTQSDKEALLSRGYSDVHTVHEVQGETYSDVSLVRLTPTPVSIIAGDSPHVLVALSRHTCSLKYYTVVMDPLVSIIRDLEKLSSYLLDMYKVDAGTQXQLQIDSVFKGSNLFVAAPKTGDISDMQFYYDKCLPGNSTMMNNFDAVTMRLTDISLNVKDCILDMSKSVAAPKDQIKPLIPMVRTAAEMPRQTGLLENLVAMIKRNFNAPELSGIIDIENTASLVVDKFFDSYLLKEKRKPNKNVSLFSRESLNRWLEKQEQVTIGQLADFDFVDLPAVDQYRHMYKAQPKQKLDTSIQTEYPALQTIVYHSKKINAIFGPLFSELTRQLLDSVDSSRFLFFTRKTPAQIEDFFGDLDSHVPMDVLELDISKYDKSQNEFHCAVEYEIWRRLGFEDFLGEVWKQGHRKTTLKDYTAGIKTCIWYQRKSGDVTTFIGNTVIIAACLASMLPMEKIIKGAFCGDDSLLYFPKGCEFPDVQHSANLMWNFEAKLFKKQYGYFCGRYVIHHDRGCIVYYDPLKLISKLGAKHIKDWEHLEEFRRSLCDVAVSLNNCAYYTQLDDAVWEVHKTAPPGSFVYKSLVKYLSDKVLFRSLFIDGSSC.

Residues 50-458 form a methyltransferase region; it reads FSKVISEEQT…QSLSMTFYLH (409 aa). One can recognise an Alphavirus-like MT domain in the interval 72-281; it reads TFYNTQNAVH…HSYSNILKYV (210 aa). The region spanning 801–963 is the (+)RNA virus helicase ATP-binding domain; that stretch reads VVYSDMAKLR…KLEVDEVETR (163 aa). The interval 830–1085 is helicase; sequence LVDGVPGCGK…RHTCSLKYYT (256 aa). 833 to 840 contributes to the ATP binding site; the sequence is GVPGCGKT. In terms of domain architecture, (+)RNA virus helicase C-terminal spans 964 to 1116; that stretch reads RTTLRCPADV…DMYKVDAGTQ (153 aa). Positions 1380-1493 constitute a RdRp catalytic domain; the sequence is MDVLELDISK…YFPKGCEFPD (114 aa).

The protein belongs to the ssRNA positive-strand viruses RNA-directed RNA polymerase family. In terms of assembly, heterodimer of a large and a small subunit. Interacts, via its helicase region, with the Nicotiana tabacum arginine decarboxylase 1A (ADC1A) C-terminal internal region.

It carries out the reaction RNA(n) + a ribonucleoside 5'-triphosphate = RNA(n+1) + diphosphate. The enzyme catalyses ATP + H2O = ADP + phosphate + H(+). Its function is as follows. Is an RNA-dependent RNA polymerase active in viral RNA replication. In terms of biological role, is a methyltransferase active in RNA capping and an RNA helicase. Methyltransferase displays a cytoplasmic capping enzyme activity. This function is necessary since all viral RNAs are synthesized in the cytoplasm, and host capping enzymes are restricted to the nucleus. Helicase region probably exhibits NTPase and RNA unwinding activities (Potential). It also acts as a suppressor of RNA-mediated gene silencing, also known as post-transcriptional gene silencing (PTGS), a mechanism of plant viral defense that limits the accumulation of viral RNAs. May mediate silencing suppression through either inhibition of HEN1-mediated siRNA or siRNA demethylation. The polypeptide is Replicase large subunit (Nicotiana tabacum (Common tobacco)).